The following is a 490-amino-acid chain: ATP synthase subunit beta, chloroplastic (490 aa).

169 to 176 provides a ligand contact to ATP; the sequence is GGAGVGKT.

This sequence belongs to the ATPase alpha/beta chains family. As to quaternary structure, F-type ATPases have 2 components, CF(1) - the catalytic core - and CF(0) - the membrane proton channel. CF(1) has five subunits: alpha(3), beta(3), gamma(1), delta(1), epsilon(1). CF(0) has four main subunits: a(1), b(1), b'(1) and c(9-12).

Its subcellular location is the plastid. It is found in the chloroplast thylakoid membrane. The catalysed reaction is ATP + H2O + 4 H(+)(in) = ADP + phosphate + 5 H(+)(out). Produces ATP from ADP in the presence of a proton gradient across the membrane. The catalytic sites are hosted primarily by the beta subunits. This Cyanidium caldarium (Red alga) protein is ATP synthase subunit beta, chloroplastic.